The primary structure comprises 104 residues: Pole-localizer protein TmaR (104 aa).

Coiled-coil stretches lie at residues 7 to 34 (IVNQARRKNKLKRELLDNEKKVRDNRKR) and 76 to 96 (SAEISKARRDISRRIRELTEE).

This sequence belongs to the pole-localizer TmaR family.

The protein resides in the cytoplasm. In terms of biological role, pole-localizer protein involved in the regulation of several cellular processes. The sequence is that of Pole-localizer protein TmaR from Vibrio campbellii (strain ATCC BAA-1116).